The primary structure comprises 124 residues: Small ribosomal subunit protein uS12 (124 aa).

Aspartate 89 is modified (3-methylthioaspartic acid). Residues 103–124 (DTAGVQKRRQGRSKYGAKRPKS) are disordered. The span at 108–124 (QKRRQGRSKYGAKRPKS) shows a compositional bias: basic residues.

This sequence belongs to the universal ribosomal protein uS12 family. As to quaternary structure, part of the 30S ribosomal subunit. Contacts proteins S8 and S17. May interact with IF1 in the 30S initiation complex.

In terms of biological role, with S4 and S5 plays an important role in translational accuracy. Interacts with and stabilizes bases of the 16S rRNA that are involved in tRNA selection in the A site and with the mRNA backbone. Located at the interface of the 30S and 50S subunits, it traverses the body of the 30S subunit contacting proteins on the other side and probably holding the rRNA structure together. The combined cluster of proteins S8, S12 and S17 appears to hold together the shoulder and platform of the 30S subunit. This chain is Small ribosomal subunit protein uS12, found in Methylococcus capsulatus (strain ATCC 33009 / NCIMB 11132 / Bath).